A 354-amino-acid polypeptide reads, in one-letter code: Methylthioribose-1-phosphate isomerase (354 aa).

Substrate-binding positions include 58-60 (RGA), arginine 101, and glutamine 204. The active-site Proton donor is aspartate 245. 255–256 (NK) is a substrate binding site.

The protein belongs to the eIF-2B alpha/beta/delta subunits family. MtnA subfamily.

It carries out the reaction 5-(methylsulfanyl)-alpha-D-ribose 1-phosphate = 5-(methylsulfanyl)-D-ribulose 1-phosphate. The protein operates within amino-acid biosynthesis; L-methionine biosynthesis via salvage pathway; L-methionine from S-methyl-5-thio-alpha-D-ribose 1-phosphate: step 1/6. Catalyzes the interconversion of methylthioribose-1-phosphate (MTR-1-P) into methylthioribulose-1-phosphate (MTRu-1-P). This is Methylthioribose-1-phosphate isomerase from Xylella fastidiosa (strain M23).